A 483-amino-acid chain; its full sequence is UDP-N-acetylmuramoyl-L-alanyl-D-glutamate--2,6-diaminopimelate ligase (483 aa).

S29 is a UDP-N-acetyl-alpha-D-muramoyl-L-alanyl-D-glutamate binding site. 107-113 is a binding site for ATP; the sequence is GTSGKTS. Residues 149-150, S176, Q182, and R184 contribute to the UDP-N-acetyl-alpha-D-muramoyl-L-alanyl-D-glutamate site; that span reads TT. Residue K216 is modified to N6-carboxylysine. Residues R380, 404 to 407, G452, and E456 contribute to the meso-2,6-diaminopimelate site; that span reads DNPR. The Meso-diaminopimelate recognition motif motif lies at 404 to 407; it reads DNPR.

Belongs to the MurCDEF family. MurE subfamily. It depends on Mg(2+) as a cofactor. Post-translationally, carboxylation is probably crucial for Mg(2+) binding and, consequently, for the gamma-phosphate positioning of ATP.

It localises to the cytoplasm. The enzyme catalyses UDP-N-acetyl-alpha-D-muramoyl-L-alanyl-D-glutamate + meso-2,6-diaminopimelate + ATP = UDP-N-acetyl-alpha-D-muramoyl-L-alanyl-gamma-D-glutamyl-meso-2,6-diaminopimelate + ADP + phosphate + H(+). It participates in cell wall biogenesis; peptidoglycan biosynthesis. Its function is as follows. Catalyzes the addition of meso-diaminopimelic acid to the nucleotide precursor UDP-N-acetylmuramoyl-L-alanyl-D-glutamate (UMAG) in the biosynthesis of bacterial cell-wall peptidoglycan. The chain is UDP-N-acetylmuramoyl-L-alanyl-D-glutamate--2,6-diaminopimelate ligase from Chelativorans sp. (strain BNC1).